A 192-amino-acid polypeptide reads, in one-letter code: MNHNQMNMHVPMNQVAGAPNVAMQMPVPGPIMQQQSPQQMQPAPVPQQTQQDKMDNISKVKSLMGSLRESIPMTLKSAAQILHQNHNADSNTQKGMDNPVPRFEKNLEEFFSICDQMELHLRTATTCIQQAQSAAHYLPLSVIASRLDSGPTTQETTLSYPQYLKTVGLQISYAKDIHDTLVAAAQNISPPE.

The segment at 32–51 (MQQQSPQQMQPAPVPQQTQQ) is disordered.

The protein belongs to the Mediator complex subunit 29 family. In terms of assembly, component of the Mediator complex.

The protein resides in the nucleus. Its function is as follows. Component of the Mediator complex, a coactivator involved in the regulated transcription of nearly all RNA polymerase II-dependent genes. Mediator functions as a bridge to convey information from gene-specific regulatory proteins to the basal RNA polymerase II transcription machinery. Mediator is recruited to promoters by direct interactions with regulatory proteins and serves as a scaffold for the assembly of a functional preinitiation complex with RNA polymerase II and the general transcription factors. The polypeptide is Mediator of RNA polymerase II transcription subunit 29 (ix) (Bombyx mori (Silk moth)).